The primary structure comprises 123 residues: Photosystem II extrinsic protein U (123 aa).

An N-terminal signal peptide occupies residues 1–28 (MKTLARILVVFTLIVGLIGFFNPLPAQA).

The protein belongs to the PsbU family. As to quaternary structure, PSII is composed of 1 copy each of membrane proteins PsbA, PsbB, PsbC, PsbD, PsbE, PsbF, PsbH, PsbI, PsbJ, PsbK, PsbL, PsbM, PsbT, PsbX, PsbY, PsbZ, Psb30/Ycf12, peripheral proteins PsbO, CyanoQ (PsbQ), PsbU, PsbV and a large number of cofactors. It forms dimeric complexes.

The protein localises to the cellular thylakoid membrane. One of the extrinsic, lumenal subunits of photosystem II (PSII). PSII is a light-driven water plastoquinone oxidoreductase, using light energy to abstract electrons from H(2)O, generating a proton gradient subsequently used for ATP formation. The extrinsic proteins stabilize the structure of photosystem II oxygen-evolving complex (OEC), the ion environment of oxygen evolution and protect the OEC against heat-induced inactivation. The polypeptide is Photosystem II extrinsic protein U (Gloeothece citriformis (strain PCC 7424) (Cyanothece sp. (strain PCC 7424))).